The primary structure comprises 763 residues: Dual specificity tyrosine-phosphorylation-regulated kinase 1A (763 aa).

S14 carries the phosphoserine modification. The tract at residues 33 to 56 is disordered; that stretch reads QMPHSHQYSDRRQPNISDQQVSAL. A compositionally biased stretch (polar residues) spans 46-56; the sequence is PNISDQQVSAL. Y111 is modified (phosphotyrosine; by autocatalysis). The interval 115–136 is disordered; the sequence is KKRRHQQGQGDDSSHKKERKVY. The Bipartite nuclear localization signal motif lies at 117-134; that stretch reads RRHQQGQGDDSSHKKERK. At Y140 the chain carries Phosphotyrosine; by autocatalysis. At Y145 the chain carries Phosphotyrosine. A Phosphotyrosine; by autocatalysis modification is found at Y159. A Protein kinase domain is found at 159–479; the sequence is YEIDSLIGKG…PYYALQHSFF (321 aa). Position 165-173 (165-173) interacts with ATP; that stretch reads IGKGSFGQV. Y177 is modified (phosphotyrosine; by autocatalysis). K188 contributes to the ATP binding site. At Y219 the chain carries Phosphotyrosine; by autocatalysis. ATP is bound at residue 238 to 241; the sequence is FEML. Residue D287 is the Proton acceptor of the active site. The residue at position 310 (S310) is a Phosphoserine; by autocatalysis. 2 positions are modified to phosphotyrosine; by autocatalysis: Y319 and Y321. A Phosphothreonine; by autocatalysis modification is found at T402. The tract at residues 408–442 is disordered; it reads TKDGKREYKPPGTRKLHNILGVETGGPGGRRAGES. Position 449 is a phosphotyrosine; by autocatalysis (Y449). The segment covering 485–501 has biased composition (polar residues); that stretch reads EGTNTSNSVSTSPAMEQ. Disordered stretches follow at residues 485 to 540, 596 to 679, and 744 to 763; these read EGTN…HSGG, NALH…GNQA, and DREESPMTGVCVQQSPVASS. A compositionally biased stretch (low complexity) spans 502–525; the sequence is SQSSGTTSSTSSSSGGSSGTSNSG. A phosphoserine mark is found at S529 and S538. The tract at residues 595–625 is histidine-rich domain (HRD); the sequence is QNALHHHHGNSSHHHHHHHHHHHHHGQQALG. The segment covering 598 to 620 has biased composition (basic residues); sequence LHHHHGNSSHHHHHHHHHHHHHG. Polar residues predominate over residues 634–645; the sequence is NSPTNSSSTQDS. Positions 654–672 are enriched in low complexity; it reads SMTSLSSSTTSSSTSSSST. A phosphoserine mark is found at S748 and S758. The span at 754 to 763 shows a compositional bias: polar residues; that stretch reads CVQQSPVASS.

The protein belongs to the protein kinase superfamily. CMGC Ser/Thr protein kinase family. MNB/DYRK subfamily. As to quaternary structure, interacts with RAD54L2/ARIP4. Interacts with CRY2. Interacts with RANBP9. Interacts with WDR68. Interacts with SIRT1. Can also autophosphorylate on serine and threonine residues (in vitro). Autophosphorylated on numerous tyrosine residues. As to expression, detected in brain (at protein level). Ubiquitous.

Its subcellular location is the nucleus speckle. The catalysed reaction is L-seryl-[protein] + ATP = O-phospho-L-seryl-[protein] + ADP + H(+). The enzyme catalyses L-threonyl-[protein] + ATP = O-phospho-L-threonyl-[protein] + ADP + H(+). It carries out the reaction L-tyrosyl-[protein] + ATP = O-phospho-L-tyrosyl-[protein] + ADP + H(+). It catalyses the reaction [DNA-directed RNA polymerase] + ATP = phospho-[DNA-directed RNA polymerase] + ADP + H(+). Inhibited by RANBP9. Inhibited by harmine, leucettamine B and leucettine L41. Dual-specificity kinase which possesses both serine/threonine and tyrosine kinase activities. Exhibits a substrate preference for proline at position P+1 and arginine at position P-3. Plays an important role in double-strand breaks (DSBs) repair following DNA damage. Mechanistically, phosphorylates RNF169 and increases its ability to block accumulation of TP53BP1 at the DSB sites thereby promoting homologous recombination repair (HRR). Also acts as a positive regulator of transcription by acting as a CTD kinase that mediates phosphorylation of the CTD (C-terminal domain) of the large subunit of RNA polymerase II (RNAP II) POLR2A. May play a role in a signaling pathway regulating nuclear functions of cell proliferation. Modulates alternative splicing by phosphorylating the splice factor SRSF6. Has pro-survival function and negatively regulates the apoptotic process. Promotes cell survival upon genotoxic stress through phosphorylation of SIRT1. This in turn inhibits p53/TP53 activity and apoptosis. Phosphorylates SEPTIN4, SEPTIN5 and SF3B1 at 'Thr-434'. In Rattus norvegicus (Rat), this protein is Dual specificity tyrosine-phosphorylation-regulated kinase 1A (Dyrk1a).